The sequence spans 310 residues: N-acetyl-gamma-glutamyl-phosphate reductase (310 aa).

Cysteine 117 is an active-site residue.

It belongs to the NAGSA dehydrogenase family. Type 2 subfamily.

The protein localises to the cytoplasm. It catalyses the reaction N-acetyl-L-glutamate 5-semialdehyde + phosphate + NADP(+) = N-acetyl-L-glutamyl 5-phosphate + NADPH + H(+). It participates in amino-acid biosynthesis; L-arginine biosynthesis; N(2)-acetyl-L-ornithine from L-glutamate: step 3/4. Functionally, catalyzes the NADPH-dependent reduction of N-acetyl-5-glutamyl phosphate to yield N-acetyl-L-glutamate 5-semialdehyde. This chain is N-acetyl-gamma-glutamyl-phosphate reductase, found in Allorhizobium ampelinum (strain ATCC BAA-846 / DSM 112012 / S4) (Agrobacterium vitis (strain S4)).